A 144-amino-acid polypeptide reads, in one-letter code: Maximins 10/H15 (144 aa).

The signal sequence occupies residues 1 to 18; that stretch reads MNFKYIVAVSFLIASAYA. The propeptide occupies 19 to 43; it reads RSVQNDEQSLSQRDVLEEESLREIR. The residue at position 70 (S70) is a Serine amide. A propeptide spanning residues 74–123 is cleaved from the precursor; that stretch reads TAEDHEVMKRLEAVMRDLDSLDYPEEATERETRGFNQEEIANLFTKKEKR. L143 carries the post-translational modification Leucine amide.

The protein belongs to the bombinin family. In terms of tissue distribution, expressed by the skin glands.

Its subcellular location is the secreted. In terms of biological role, maximin-10 shows antimicrobial activity against bacteria and against the fungus C.albicans. It has little hemolytic activity. Maximin-H15 shows antimicrobial activity against bacteria and against the fungus C.albicans. Shows strong hemolytic activity. This Bombina maxima (Giant fire-bellied toad) protein is Maximins 10/H15.